The following is a 226-amino-acid chain: Ribosomal RNA large subunit methyltransferase E (226 aa).

The segment at 1 to 25 (MVKPPAGGNEGGRGKPARLKTAYGR) is disordered. Gly-82, Trp-84, Asp-100, Asp-116, and Asp-140 together coordinate S-adenosyl-L-methionine. The active-site Proton acceptor is Lys-180.

The protein belongs to the class I-like SAM-binding methyltransferase superfamily. RNA methyltransferase RlmE family.

Its subcellular location is the cytoplasm. The enzyme catalyses uridine(2552) in 23S rRNA + S-adenosyl-L-methionine = 2'-O-methyluridine(2552) in 23S rRNA + S-adenosyl-L-homocysteine + H(+). Its function is as follows. Specifically methylates the uridine in position 2552 of 23S rRNA at the 2'-O position of the ribose in the fully assembled 50S ribosomal subunit. In Caulobacter vibrioides (strain ATCC 19089 / CIP 103742 / CB 15) (Caulobacter crescentus), this protein is Ribosomal RNA large subunit methyltransferase E.